The sequence spans 344 residues: Phosphoribosylformylglycinamidine cyclo-ligase (344 aa).

This sequence belongs to the AIR synthase family.

The protein resides in the cytoplasm. The enzyme catalyses 2-formamido-N(1)-(5-O-phospho-beta-D-ribosyl)acetamidine + ATP = 5-amino-1-(5-phospho-beta-D-ribosyl)imidazole + ADP + phosphate + H(+). It functions in the pathway purine metabolism; IMP biosynthesis via de novo pathway; 5-amino-1-(5-phospho-D-ribosyl)imidazole from N(2)-formyl-N(1)-(5-phospho-D-ribosyl)glycinamide: step 2/2. In Neisseria meningitidis serogroup B (strain ATCC BAA-335 / MC58), this protein is Phosphoribosylformylglycinamidine cyclo-ligase.